Consider the following 125-residue polypeptide: Barwin (125 aa).

A Pyrrolidone carboxylic acid modification is found at Gln-1. A Barwin domain is found at 1–125 (QQANDVRATY…VNYQFVDCRD (125 aa)). 3 cysteine pairs are disulfide-bonded: Cys-31–Cys-63, Cys-52–Cys-86, and Cys-66–Cys-123.

Its function is as follows. May be involved in a defense mechanism. Probable plant lectin. Binds weakly a chitin analog. The chain is Barwin from Hordeum vulgare (Barley).